The sequence spans 449 residues: Glucose-6-phosphate isomerase (449 aa).

Glu291 acts as the Proton donor in catalysis. Catalysis depends on residues His312 and Lys426.

The protein belongs to the GPI family.

It is found in the cytoplasm. The catalysed reaction is alpha-D-glucose 6-phosphate = beta-D-fructose 6-phosphate. Its pathway is carbohydrate biosynthesis; gluconeogenesis. It participates in carbohydrate degradation; glycolysis; D-glyceraldehyde 3-phosphate and glycerone phosphate from D-glucose: step 2/4. In terms of biological role, catalyzes the reversible isomerization of glucose-6-phosphate to fructose-6-phosphate. This chain is Glucose-6-phosphate isomerase, found in Streptococcus pyogenes serotype M28 (strain MGAS6180).